The sequence spans 651 residues: Polyadenylate-binding protein 1 (651 aa).

Over residues 1–27 (MSSTESPVPAAAAPAEAVPASTPAPAA) the composition is skewed to low complexity. The tract at residues 1-42 (MSSTESPVPAAAAPAEAVPASTPAPAAEQPAVGNGEQRNNAD) is disordered. RRM domains follow at residues 47 to 125 (TSLY…WSQR), 135 to 211 (GNIF…HHIP), 227 to 304 (TNVY…RAQK), and 330 to 407 (VNLY…LAQR). Disordered stretches follow at residues 481–554 (QPGQ…EADQ) and 632–651 (QNDS…KTEA). Residues 529 to 540 (AGQPVPGQPMPR) show a composition bias toward pro residues. The PABC domain occupies 555-632 (PGALTAAALA…ALEVLKEYQQ (78 aa)). Positions 636-651 (AGAEAEANAEAPKTEA) are enriched in low complexity.

This sequence belongs to the polyadenylate-binding protein type-1 family. Part of large ribonucleoprotein complexes (mRNPs) containing RNA-binding proteins RRM4 and PAB1, endosome-binding protein UPA1, core scaffold protein UPA2 and associated factor GRP1. Interacts (via PABC domain) with UPA1 (via PAM2 domain). Interacts (via PABC domain) with UPA2 (via PAM2 domains).

The protein localises to the cytoplasm. The protein resides in the cytoskeleton. It localises to the endosome. Its function is as follows. RNA-binding protein involved in the formation of polar-growing hyphae which is essential for infection by the plant pathogen. Component of endosomal mRNA transport that regulates polarity of the infectious hyphae by transporting a broad spectrum of cargo mRNAs from the nucleus to cell poles. This is Polyadenylate-binding protein 1 from Mycosarcoma maydis (Corn smut fungus).